Reading from the N-terminus, the 436-residue chain is Trigger factor (436 aa).

The PPIase FKBP-type domain maps to 163-248 (GDRVVLDFAG…VKEVAEGVLP (86 aa)).

The protein belongs to the FKBP-type PPIase family. Tig subfamily.

Its subcellular location is the cytoplasm. The catalysed reaction is [protein]-peptidylproline (omega=180) = [protein]-peptidylproline (omega=0). Its function is as follows. Involved in protein export. Acts as a chaperone by maintaining the newly synthesized protein in an open conformation. Functions as a peptidyl-prolyl cis-trans isomerase. The chain is Trigger factor from Bordetella parapertussis (strain 12822 / ATCC BAA-587 / NCTC 13253).